The chain runs to 453 residues: MEQQPSVPRSCTNVARETPMNLNIQSTTGTRYELSVPPDETVDGLKRRISQRLKVPKDRLTLLHRETRLSSGKLQDLGISDGSRLTLLPSVEAGLMSQMSRPEQSVMQALESLTETQVNDFLSGRSPLTLALRVGDHMMFVQLQLAAQQSGSSHLQHRHVITRGAETSASPQYRTLHTSTSAVSHLASCTPGPTPPTTLSPTSSTHCNGPHSSPLTTSVFRSHGEGVAVSPCAEQAPCSTRGTEGTSSSPSSRSRKPGAIIESFVNHAPGVFSGTFSGTLHPQCQDSAGRPRRDIGTILQILNDLLSATRHYQGMPPSLTTLRCHTQCASQARNAKATSPQSTSPQQTTHPVGHCQTQTRTYKPSGDRLRQTENRATRCKVERLQLLMHQKRLRRKARRDSRAPYHWMPTRKSSRTSSNSSTSSGEGSLEIDFEDSLWKPDVKAELNSEFVVA.

Positions 20–94 (MNLNIQSTTG…LTLLPSVEAG (75 aa)) constitute a Ubiquitin-like domain. 4 disordered regions span residues 184 to 219 (SHLA…TTSV), 232 to 256 (CAEQ…RSRK), 333 to 376 (RNAK…ENRA), and 390 to 429 (QKRL…EGSL). Residues 206–219 (HCNGPHSSPLTTSV) show a composition bias toward polar residues. 2 stretches are compositionally biased toward low complexity: residues 239-252 (STRG…SPSS) and 338-351 (TSPQ…TTHP). Positions 365 to 376 (SGDRLRQTENRA) are enriched in basic and acidic residues. Residues 390–399 (QKRLRRKARR) show a composition bias toward basic residues. A compositionally biased stretch (low complexity) spans 415–428 (RTSSNSSTSSGEGS).

The protein localises to the nucleus. Its subcellular location is the cytoplasm. The protein resides in the cytosol. It localises to the nucleolus. Functionally, facilitates ubiquitin-independent proteasomal degradation of polycomb protein CBX4. Plays a role in inhibiting the activity of glucokinase GCK and both glucose-induced and basal insulin secretion. The sequence is that of Midnolin-A (midn-a) from Xenopus laevis (African clawed frog).